The primary structure comprises 193 residues: uncharacterized protein (193 aa).

A signal peptide spans 1–14; the sequence is MSTSLLFSLSPSSS.

This is an uncharacterized protein from Saccharomyces cerevisiae (strain ATCC 204508 / S288c) (Baker's yeast).